Consider the following 535-residue polypeptide: Transmembrane protein 151 homolog (535 aa).

A run of 3 helical transmembrane segments spans residues 27 to 47, 73 to 93, and 254 to 274; these read GYGKCLICSLLLVLCFFYATY, YNFVPIVFGLMLYIVYLMECW, and PWFLHPIVFWFFSILVLSWPL. Residues 498 to 535 are disordered; the sequence is ASISHSSSKDLKSLTLKNNNGAANNNNNNNNENPEEQP. Over residues 510–529 the composition is skewed to low complexity; it reads SLTLKNNNGAANNNNNNNNE.

Belongs to the TMEM151 family.

The protein resides in the membrane. This Caenorhabditis briggsae protein is Transmembrane protein 151 homolog.